Here is a 346-residue protein sequence, read N- to C-terminus: Very-long-chain 3-oxoacyl-CoA reductase (346 aa).

Residues Leu-19–Gly-39 traverse the membrane as a helical segment. NADP(+) is bound by residues Val-65, Asp-119, Asn-146, Tyr-220, Lys-224, Val-253, and Ser-255. Residue Tyr-220 is the Proton donor of the active site. Lys-224 serves as the catalytic Lowers pKa of active site Tyr.

It belongs to the short-chain dehydrogenases/reductases (SDR) family.

The protein resides in the endoplasmic reticulum membrane. It carries out the reaction a very-long-chain (3R)-3-hydroxyacyl-CoA + NADP(+) = a very-long-chain 3-oxoacyl-CoA + NADPH + H(+). The protein operates within lipid metabolism; fatty acid biosynthesis. In terms of biological role, component of the microsomal membrane bound fatty acid elongation system, which produces the 26-carbon very long-chain fatty acids (VLCFA) from palmitate. Catalyzes the reduction of the 3-ketoacyl-CoA intermediate that is formed in each cycle of fatty acid elongation. VLCFAs serve as precursors for ceramide and sphingolipids. In Debaryomyces hansenii (strain ATCC 36239 / CBS 767 / BCRC 21394 / JCM 1990 / NBRC 0083 / IGC 2968) (Yeast), this protein is Very-long-chain 3-oxoacyl-CoA reductase.